The primary structure comprises 651 residues: tRNA uridine 5-carboxymethylaminomethyl modification enzyme MnmG (651 aa).

11–16 (GAGHAG) contributes to the FAD binding site. 296–310 (GPRYCPSIEDKIVRF) is an NAD(+) binding site.

It belongs to the MnmG family. As to quaternary structure, homodimer. Heterotetramer of two MnmE and two MnmG subunits. The cofactor is FAD.

It localises to the cytoplasm. In terms of biological role, NAD-binding protein involved in the addition of a carboxymethylaminomethyl (cmnm) group at the wobble position (U34) of certain tRNAs, forming tRNA-cmnm(5)s(2)U34. The sequence is that of tRNA uridine 5-carboxymethylaminomethyl modification enzyme MnmG from Chloroflexus aurantiacus (strain ATCC 29366 / DSM 635 / J-10-fl).